A 243-amino-acid chain; its full sequence is Uridylate kinase (243 aa).

15–18 contributes to the ATP binding site; the sequence is KLSG. Residues 23 to 28 are involved in allosteric activation by GTP; the sequence is GEEGFG. G57 contributes to the UMP binding site. The ATP site is built by G58 and R62. UMP contacts are provided by residues D77 and 138–145; that span reads TGNPFCTT. 3 residues coordinate ATP: T165, Y171, and D174.

Belongs to the UMP kinase family. As to quaternary structure, homohexamer.

It localises to the cytoplasm. The enzyme catalyses UMP + ATP = UDP + ADP. It functions in the pathway pyrimidine metabolism; CTP biosynthesis via de novo pathway; UDP from UMP (UMPK route): step 1/1. With respect to regulation, allosterically activated by GTP. Inhibited by UTP. Its function is as follows. Catalyzes the reversible phosphorylation of UMP to UDP. The sequence is that of Uridylate kinase from Shewanella denitrificans (strain OS217 / ATCC BAA-1090 / DSM 15013).